The chain runs to 144 residues: Large ribosomal subunit protein uL16 (144 aa).

Positions 1–17 are enriched in basic residues; sequence MLQPKKTKFRRQQKGRA. The interval 1-22 is disordered; the sequence is MLQPKKTKFRRQQKGRAKGNAQ.

Belongs to the universal ribosomal protein uL16 family. In terms of assembly, part of the 50S ribosomal subunit.

Its function is as follows. Binds 23S rRNA and is also seen to make contacts with the A and possibly P site tRNAs. In Bacteroides fragilis (strain ATCC 25285 / DSM 2151 / CCUG 4856 / JCM 11019 / LMG 10263 / NCTC 9343 / Onslow / VPI 2553 / EN-2), this protein is Large ribosomal subunit protein uL16.